We begin with the raw amino-acid sequence, 353 residues long: 3'-5' exonuclease (353 aa).

Residues 1–119 (MEKYLTKMPI…PSPEKEKPEK (119 aa)) form a disordered region. 2 stretches are compositionally biased toward basic and acidic residues: residues 13–30 (KANE…ETPK) and 37–50 (KKDT…KENA). A compositionally biased stretch (basic residues) spans 59 to 70 (TKGRPGRPAAKR). Residues 71–90 (KNLDTPDVTEKLAMEEENPP) show a composition bias toward basic and acidic residues. S103, S109, and S111 each carry phosphoserine. One can recognise a 3'-5' exonuclease domain in the interval 145–313 (VLQWVEKQKD…GQVIYRELER (169 aa)). Positions 162, 164, and 300 each coordinate Mg(2+).

It belongs to the WRNexo family.

It is found in the nucleus. Has exonuclease activity on both single-stranded and duplex templates bearing overhangs, but not blunt ended duplex DNA, and cleaves in a 3'-5' direction. Essential for the formation of DNA replication focal centers. Has an important role in maintaining genome stability. This Drosophila melanogaster (Fruit fly) protein is 3'-5' exonuclease.